The chain runs to 324 residues: tRNA (cytidine(32)/guanosine(34)-2'-O)-methyltransferase (324 aa).

S-adenosyl-L-methionine is bound by residues G53, W55, D75, D91, and D116. K156 acts as the Proton acceptor in catalysis. Positions 221–240 (DFNQLDGPTRVIVPFVACGD) are required for binding to WDR6.

Belongs to the class I-like SAM-binding methyltransferase superfamily. RNA methyltransferase RlmE family. TRM7 subfamily. In terms of assembly, interacts with WDR6; the interaction is direct, and required for 2'-O-methylation of position 34 in substrate tRNAs.

Its subcellular location is the cytoplasm. The protein resides in the nucleus. It catalyses the reaction cytidine(32)/guanosine(34) in tRNA + 2 S-adenosyl-L-methionine = 2'-O-methylcytidine(32)/2'-O-methylguanosine(34) in tRNA + 2 S-adenosyl-L-homocysteine + 2 H(+). Methylates the 2'-O-ribose of nucleotides at positions 32 and 34 of the tRNA anticodon loop of substrate tRNAs. Requisite for faithful cytoplasmic translation. Requires THADA for methylation of the cytidine at position 32 of the anticodon loop of substrate tRNAs. Requires WDR6 for methylation of the nucleotide at position 34 of the anticodon loop of substrate tRNAs. Promotes translation efficiency of the UUU codon. Plays a role in neurogenesis. Required for expression of genes involved in neurogenesis and mitochondrial translation and energy generation. Requisite for RNA-mediated gene silencing. May modify position 32 in tRNA(Arg(ACG)), tRNA(Gln(CUG)), tRNA(Leu(UAA)), tRNA(Leu(UAG)), tRNA(Leu(AAG)), tRNA(Leu(CAG)), tRNA(Phe(GAA)), tRNA(Trp(CCA)) and tRNA(Val(AAC)), and position 34 in tRNA(Phe(GAA)), tRNA(Leu(CAA)), tRNA(Leu(UAA)), tRNA(Sec(UCA)), and tRNA(Trp(CCA)). The polypeptide is tRNA (cytidine(32)/guanosine(34)-2'-O)-methyltransferase (Mus musculus (Mouse)).